A 149-amino-acid chain; its full sequence is Putative pre-16S rRNA nuclease (149 aa).

It belongs to the YqgF nuclease family.

It localises to the cytoplasm. Its function is as follows. Could be a nuclease involved in processing of the 5'-end of pre-16S rRNA. The chain is Putative pre-16S rRNA nuclease from Cupriavidus metallidurans (strain ATCC 43123 / DSM 2839 / NBRC 102507 / CH34) (Ralstonia metallidurans).